We begin with the raw amino-acid sequence, 250 residues long: Ubiquinone/menaquinone biosynthesis C-methyltransferase UbiE (250 aa).

Residues threonine 74, aspartate 94, aspartate 122–alanine 123, and serine 139 each bind S-adenosyl-L-methionine.

It belongs to the class I-like SAM-binding methyltransferase superfamily. MenG/UbiE family.

The catalysed reaction is a 2-demethylmenaquinol + S-adenosyl-L-methionine = a menaquinol + S-adenosyl-L-homocysteine + H(+). It carries out the reaction a 2-methoxy-6-(all-trans-polyprenyl)benzene-1,4-diol + S-adenosyl-L-methionine = a 5-methoxy-2-methyl-3-(all-trans-polyprenyl)benzene-1,4-diol + S-adenosyl-L-homocysteine + H(+). It participates in quinol/quinone metabolism; menaquinone biosynthesis; menaquinol from 1,4-dihydroxy-2-naphthoate: step 2/2. It functions in the pathway cofactor biosynthesis; ubiquinone biosynthesis. Methyltransferase required for the conversion of demethylmenaquinol (DMKH2) to menaquinol (MKH2) and the conversion of 2-polyprenyl-6-methoxy-1,4-benzoquinol (DDMQH2) to 2-polyprenyl-3-methyl-6-methoxy-1,4-benzoquinol (DMQH2). The chain is Ubiquinone/menaquinone biosynthesis C-methyltransferase UbiE from Roseobacter denitrificans (strain ATCC 33942 / OCh 114) (Erythrobacter sp. (strain OCh 114)).